The following is a 192-amino-acid chain: Adenylate kinase (192 aa).

ATP is bound at residue 10–18 (GVPGVGGTT).

Belongs to the archaeal adenylate kinase family. Monomer.

Its subcellular location is the cytoplasm. It carries out the reaction AMP + ATP = 2 ADP. This chain is Adenylate kinase, found in Methanococcus maripaludis (strain C5 / ATCC BAA-1333).